The chain runs to 381 residues: Chorismate synthase (381 aa).

NADP(+) is bound by residues R41 and R47. FMN contacts are provided by residues 127 to 129 (RAS), 247 to 248 (QA), G291, 306 to 310 (KPIPT), and R332.

Belongs to the chorismate synthase family. In terms of assembly, homotetramer. FMNH2 is required as a cofactor.

The enzyme catalyses 5-O-(1-carboxyvinyl)-3-phosphoshikimate = chorismate + phosphate. It functions in the pathway metabolic intermediate biosynthesis; chorismate biosynthesis; chorismate from D-erythrose 4-phosphate and phosphoenolpyruvate: step 7/7. In terms of biological role, catalyzes the anti-1,4-elimination of the C-3 phosphate and the C-6 proR hydrogen from 5-enolpyruvylshikimate-3-phosphate (EPSP) to yield chorismate, which is the branch point compound that serves as the starting substrate for the three terminal pathways of aromatic amino acid biosynthesis. This reaction introduces a second double bond into the aromatic ring system. This Anaeromyxobacter dehalogenans (strain 2CP-C) protein is Chorismate synthase.